The following is an 80-amino-acid chain: Defensin-like protein 44 (80 aa).

An N-terminal signal peptide occupies residues 1–27 (MAITKTSVTLLLLIIMAASLSNFSVLA). 4 disulfides stabilise this stretch: Cys-40–Cys-79, Cys-44–Cys-67, Cys-53–Cys-77, and Cys-57–Cys-78.

This sequence belongs to the DEFL family.

Its subcellular location is the secreted. The sequence is that of Defensin-like protein 44 from Arabidopsis thaliana (Mouse-ear cress).